The primary structure comprises 191 residues: Heme-binding protein 1 (191 aa).

The protein belongs to the HEBP family. Monomer.

The protein localises to the cytoplasm. Functionally, may bind free porphyrinogens that may be present in the cell and thus facilitate removal of these potentially toxic compound. Binds with a high affinity to one molecule of heme or porphyrins. It binds metalloporphyrins, free porphyrins and N-methylprotoporphyrin with similar affinities. The sequence is that of Heme-binding protein 1 (HEBP1) from Bos taurus (Bovine).